We begin with the raw amino-acid sequence, 1037 residues long: Presequence protease, mitochondrial (1037 aa).

A mitochondrion-targeting transit peptide spans 1–28; that stretch reads MWRCGGRQGLCVLRRLSGGHAHHRAWRW. Position 104 (His104) interacts with Zn(2+). The active-site Proton acceptor is the Glu107. His108 is a binding site for Zn(2+). A disulfide bridge links Cys119 with Cys556. Glu180 is a catalytic residue. Glu205 provides a ligand contact to Zn(2+). Lys759 carries the post-translational modification N6-acetyllysine. The residue at position 770 (Lys770) is an N6-acetyllysine; alternate. Residue Lys770 is modified to N6-succinyllysine; alternate. Positions 804–814 are enriched in basic residues; the sequence is GRSKKERRPVR. The disordered stretch occupies residues 804 to 834; that stretch reads GRSKKERRPVRPHTVEKPVPSSSGGDAHVPH. At Lys849 the chain carries N6-succinyllysine. The residue at position 884 (Lys884) is an N6-acetyllysine. Lys946 carries the post-translational modification N6-succinyllysine.

This sequence belongs to the peptidase M16 family. PreP subfamily. As to quaternary structure, monomer and homodimer; homodimerization is induced by binding of the substrate. Zn(2+) serves as cofactor. In terms of processing, a disulfide bond locks the enzyme in the closed conformation preventing substrate entry into the catalytic chamber. As to expression, widely expressed. Expressed at higher level in muscle and heart compared to brain, pancreas, liver, lung and placenta.

The protein resides in the mitochondrion. Its subcellular location is the mitochondrion matrix. Its activity is regulated as follows. Mainly exists in a closed and catalytically competent conformation but a closed-to-open switch allows substrate entry into the catalytic chamber. Substrate binding induces closure and dimerization. A disulfide bond may lock the enzyme in a closed conformation preventing substrate entry into the catalytic chamber, participating in redox regulation of the enzyme. Inhibited by metal-chelating agents. Inhibited by nickel and zinc excess, and slightly activated by manganese. Its function is as follows. Metalloendopeptidase of the mitochondrial matrix that functions in peptide cleavage and degradation rather than in protein processing. Has an ATP-independent activity. Specifically cleaves peptides in the range of 5 to 65 residues. Shows a preference for cleavage after small polar residues and before basic residues, but without any positional preference. Degrades the transit peptides of mitochondrial proteins after their cleavage. Also degrades other unstructured peptides. It is also able to degrade amyloid-beta protein 40, one of the peptides produced by APP processing, when it accumulates in mitochondrion. It is a highly efficient protease, at least toward amyloid-beta protein 40. Cleaves that peptide at a specific position and is probably not processive, releasing digested peptides intermediates that can be further cleaved subsequently. It is also able to degrade amyloid-beta protein 42. The polypeptide is Presequence protease, mitochondrial (Homo sapiens (Human)).